The primary structure comprises 151 residues: Globin CTT-VIII (151 aa).

The region spanning 4 to 148 (PMSADQLALF…MFFYILHALE (145 aa)) is the Globin domain. Heme b is bound by residues His-62 and His-97.

Belongs to the globin family. Homodimer.

The polypeptide is Globin CTT-VIII (CTT-8) (Chironomus thummi thummi (Midge)).